Here is a 179-residue protein sequence, read N- to C-terminus: Nucleoside-triphosphatase THEP1 (179 aa).

ATP contacts are provided by residues Gly7–Thr14 and Ile98–Gly105.

This sequence belongs to the THEP1 NTPase family.

The catalysed reaction is a ribonucleoside 5'-triphosphate + H2O = a ribonucleoside 5'-diphosphate + phosphate + H(+). In terms of biological role, has nucleotide phosphatase activity towards ATP, GTP, CTP, TTP and UTP. May hydrolyze nucleoside diphosphates with lower efficiency. The protein is Nucleoside-triphosphatase THEP1 of Pyrococcus abyssi (strain GE5 / Orsay).